A 319-amino-acid polypeptide reads, in one-letter code: Annexin D4 (319 aa).

2 Annexin repeats span residues 1-75 (MALP…EFSR) and 86-157 (HPWE…GLVS). Ca(2+)-binding residues include G19, G21, and E72. Phosphothreonine is present on T115. A phosphotyrosine mark is found at Y159 and Y211. Annexin repeat units follow at residues 169–240 (DSAK…ICLL) and 241–316 (KPAL…TLLS). Residue S277 is modified to Phosphoserine. At Y287 the chain carries Phosphotyrosine.

Belongs to the annexin (TC 1.A.31.1) family. Expressed mainly in roots and flowers. Lower in stems and leaves.

Its function is as follows. May be involved in osmotic stress and abscisic acid signaling in a calcium-dependent manner. The polypeptide is Annexin D4 (ANN4) (Arabidopsis thaliana (Mouse-ear cress)).